We begin with the raw amino-acid sequence, 101 residues long: MSSTLIVQLDMRTLCQEADVSADWVIEIVEHGIVEPSGRTPEEWVFDDRAPVTLKRAVKLHQELELEWEGVALALELLEEVQQLRSENSMLKQRLGRFTQM.

It belongs to the CbpM family.

Its function is as follows. Interacts with CbpA and inhibits both the DnaJ-like co-chaperone activity and the DNA binding activity of CbpA. Together with CbpA, modulates the activity of the DnaK chaperone system. Does not inhibit the co-chaperone activity of DnaJ. This Pseudomonas entomophila (strain L48) protein is Chaperone modulatory protein CbpM.